The following is a 179-amino-acid chain: Protein GrpE (179 aa).

The interval 1–20 is disordered; the sequence is MSEETKEEIKNEKVDEEVTE.

This sequence belongs to the GrpE family. As to quaternary structure, homodimer.

It is found in the cytoplasm. Participates actively in the response to hyperosmotic and heat shock by preventing the aggregation of stress-denatured proteins, in association with DnaK and GrpE. It is the nucleotide exchange factor for DnaK and may function as a thermosensor. Unfolded proteins bind initially to DnaJ; upon interaction with the DnaJ-bound protein, DnaK hydrolyzes its bound ATP, resulting in the formation of a stable complex. GrpE releases ADP from DnaK; ATP binding to DnaK triggers the release of the substrate protein, thus completing the reaction cycle. Several rounds of ATP-dependent interactions between DnaJ, DnaK and GrpE are required for fully efficient folding. This Lactococcus lactis subsp. lactis (strain IL1403) (Streptococcus lactis) protein is Protein GrpE.